Here is a 712-residue protein sequence, read N- to C-terminus: Polyribonucleotide nucleotidyltransferase (712 aa).

The Mg(2+) site is built by aspartate 484 and aspartate 490. The KH domain occupies proline 550–isoleucine 609. The S1 motif domain maps to glycine 619–lysine 686.

This sequence belongs to the polyribonucleotide nucleotidyltransferase family. It depends on Mg(2+) as a cofactor.

It is found in the cytoplasm. It catalyses the reaction RNA(n+1) + phosphate = RNA(n) + a ribonucleoside 5'-diphosphate. Functionally, involved in mRNA degradation. Catalyzes the phosphorolysis of single-stranded polyribonucleotides processively in the 3'- to 5'-direction. The sequence is that of Polyribonucleotide nucleotidyltransferase from Brachyspira hyodysenteriae (strain ATCC 49526 / WA1).